Reading from the N-terminus, the 157-residue chain is Large ribosomal subunit protein bL17 (157 aa).

The tract at residues 124-157 is disordered; it reads AAPVVSKQDRAKRVKGSKKAESRSQENEGGDAAE.

It belongs to the bacterial ribosomal protein bL17 family. As to quaternary structure, part of the 50S ribosomal subunit. Contacts protein L32.

The chain is Large ribosomal subunit protein bL17 from Chlorobaculum tepidum (strain ATCC 49652 / DSM 12025 / NBRC 103806 / TLS) (Chlorobium tepidum).